The primary structure comprises 230 residues: Ion-translocating oxidoreductase complex subunit E (230 aa).

The next 6 helical transmembrane spans lie at 18-38, 39-59, 63-83, 86-106, 128-148, and 182-202; these read ALVQ…ATNA, LGLG…ISTL, TPTE…VSAV, LINA…PLIV, ALDG…LGAM, and PFLL…MLAG.

The protein belongs to the NqrDE/RnfAE family. The complex is composed of six subunits: RsxA, RsxB, RsxC, RsxD, RsxE and RsxG.

It is found in the cell inner membrane. In terms of biological role, part of a membrane-bound complex that couples electron transfer with translocation of ions across the membrane. Required to maintain the reduced state of SoxR. This is Ion-translocating oxidoreductase complex subunit E from Escherichia fergusonii (strain ATCC 35469 / DSM 13698 / CCUG 18766 / IAM 14443 / JCM 21226 / LMG 7866 / NBRC 102419 / NCTC 12128 / CDC 0568-73).